A 67-amino-acid chain; its full sequence is Transcription elongation factor Spt4 (67 aa).

Cysteine 7, cysteine 10, cysteine 19, and cysteine 22 together coordinate Zn(2+).

It belongs to the archaeal Spt4 family. As to quaternary structure, heterodimer composed of Spt4 and Spt5. Interacts with RNA polymerase (RNAP). The complex interacts with FttA.

Its subcellular location is the chromosome. Its function is as follows. The Stp4-Spt5 complex stimulates transcription elongation on both naked DNA and histone-bound DNA (chromatin), facilitating transcription through the histone barrier. Neither protein functions alone. The complex also stimulates the transcription termination activity of FttA, neither protein alone stimulates FttA-dependent termination. The sequence is that of Transcription elongation factor Spt4 from Thermococcus kodakarensis (strain ATCC BAA-918 / JCM 12380 / KOD1) (Pyrococcus kodakaraensis (strain KOD1)).